Reading from the N-terminus, the 264-residue chain is Thymidylate synthase (264 aa).

Residue arginine 21 participates in dUMP binding. A (6R)-5,10-methylene-5,6,7,8-tetrahydrofolate-binding site is contributed by histidine 51. A dUMP-binding site is contributed by 126 to 127 (RR). Cysteine 146 serves as the catalytic Nucleophile. DUMP contacts are provided by residues 166-169 (RSCD), asparagine 177, and 207-209 (HLY). A (6R)-5,10-methylene-5,6,7,8-tetrahydrofolate-binding site is contributed by aspartate 169. Alanine 263 is a binding site for (6R)-5,10-methylene-5,6,7,8-tetrahydrofolate.

Belongs to the thymidylate synthase family. Bacterial-type ThyA subfamily. In terms of assembly, homodimer.

The protein resides in the cytoplasm. The catalysed reaction is dUMP + (6R)-5,10-methylene-5,6,7,8-tetrahydrofolate = 7,8-dihydrofolate + dTMP. It participates in pyrimidine metabolism; dTTP biosynthesis. In terms of biological role, catalyzes the reductive methylation of 2'-deoxyuridine-5'-monophosphate (dUMP) to 2'-deoxythymidine-5'-monophosphate (dTMP) while utilizing 5,10-methylenetetrahydrofolate (mTHF) as the methyl donor and reductant in the reaction, yielding dihydrofolate (DHF) as a by-product. This enzymatic reaction provides an intracellular de novo source of dTMP, an essential precursor for DNA biosynthesis. In Sodalis glossinidius (strain morsitans), this protein is Thymidylate synthase.